We begin with the raw amino-acid sequence, 99 residues long: Malonate decarboxylase acyl carrier protein (99 aa).

Serine 25 is modified (O-(phosphoribosyl dephospho-coenzyme A)serine).

It belongs to the MdcC family. Post-translationally, covalently binds the prosthetic group of malonate decarboxylase.

The protein resides in the cytoplasm. Its function is as follows. Subunit of malonate decarboxylase, it is an acyl carrier protein to which acetyl and malonyl thioester residues are bound via a 2'-(5''-phosphoribosyl)-3'-dephospho-CoA prosthetic group and turn over during the catalytic mechanism. In Pseudomonas syringae pv. tomato (strain ATCC BAA-871 / DC3000), this protein is Malonate decarboxylase acyl carrier protein.